We begin with the raw amino-acid sequence, 332 residues long: PTS-dependent dihydroxyacetone kinase, dihydroxyacetone-binding subunit DhaK (332 aa).

The DhaK domain occupies 9–331 (QPQDVVSEML…LNEDVKTISW (323 aa)). Dihydroxyacetone is bound by residues 55–58 (GSGH), Lys-106, and Asp-111. His-58 acts as the Proton acceptor in catalysis. His-220 functions as the Tele-hemiaminal-histidine intermediate in the catalytic mechanism.

As to quaternary structure, homodimer. The dihydroxyacetone kinase complex is composed of a homodimer of DhaM, a homodimer of DhaK and the subunit DhaL.

The enzyme catalyses dihydroxyacetone + phosphoenolpyruvate = dihydroxyacetone phosphate + pyruvate. It participates in polyol metabolism; glycerol degradation. Its function is as follows. Dihydroxyacetone binding subunit of the dihydroxyacetone kinase, which is responsible the phosphoenolpyruvate (PEP)-dependent phosphorylation of dihydroxyacetone via a phosphoryl group transfer from DhaL-ATP. The sequence is that of PTS-dependent dihydroxyacetone kinase, dihydroxyacetone-binding subunit DhaK from Lactococcus lactis subsp. lactis (strain IL1403) (Streptococcus lactis).